The following is a 576-amino-acid chain: Peroxisomal targeting signal receptor (576 aa).

Cys10 is covalently cross-linked (Glycyl cysteine thioester (Cys-Gly) (interchain with G-Cter in ubiquitin)). Residues Ala11 to Ser33 are amphipathic helix 1 (AH1). Lys22 is covalently cross-linked (Glycyl lysine isopeptide (Lys-Gly) (interchain with G-Cter in ubiquitin)). The amphipathic helix 2 (AH2) stretch occupies residues Arg58–Phe75. 2 short sequence motifs (wxxxF/Y motif) span residues Trp100–Phe104 and Trp128–Phe132. The segment at Ala176–Gln195 is disordered. Positions Trp196–Phe200 match the WxxxF/Y motif 3 motif. Positions Phe224–Leu240 are amphipathic helix 4 (AH4). The short motif at Trp249–Phe253 is the WxxxF/Y motif 4 element. TPR repeat units lie at residues Pro278–His311, Val312–Asn345, Leu346–Arg383, Ala384–Asp421, Ala422–Lys455, Ala456–Phe489, and Val490–Glu523.

Belongs to the peroxisomal targeting signal receptor family. In terms of assembly, interacts (via WxxxF/Y and LVxEF motifs) with PEX14; promoting translocation through the PEX13-PEX14 docking complex. Interacts with PEX8. In terms of processing, a disulfide bond is created between Cys-10 and Cys-338 or Cys-444. Post-translationally, monoubiquitinated at Cys-10 by PEX2 during PEX5 passage through the retrotranslocation channel: monoubiquitination acts as a signal for PEX5 extraction and is required for proper export from peroxisomes and recycling. When PEX5 recycling is compromised, polyubiquitinated at Lys-22 by PEX10 during its passage through the retrotranslocation channel, leading to its degradation.

It localises to the peroxisome membrane. Its subcellular location is the cytoplasm. The protein resides in the cytosol. The protein localises to the peroxisome matrix. In terms of biological role, receptor that mediates peroxisomal import of proteins containing a C-terminal PTS1-type tripeptide peroxisomal targeting signal (SKL-type). Binds to cargo proteins containing a PTS1 peroxisomal targeting signal in the cytosol, and translocates them into the peroxisome matrix by passing through the peroxisomal docking complex along with cargo proteins. PEX5 receptor is then retrotranslocated into the cytosol, leading to release of bound cargo in the peroxisome matrix, and reset for a subsequent peroxisome import cycle. Required for PEX7 ubiquitination. In Komagataella phaffii (strain GS115 / ATCC 20864) (Yeast), this protein is Peroxisomal targeting signal receptor.